Consider the following 504-residue polypeptide: Anaerobic nitric oxide reductase transcription regulator NorR (504 aa).

Aspartate 57 bears the 4-aspartylphosphate mark. Positions 187-416 constitute a Sigma-54 factor interaction domain; it reads MIGLSPGMMQ…LEHAIHRAVV (230 aa). Residues 215–222 and 278–287 each bind ATP; these read GETGTGKE and ADNGTLFLDE. A DNA-binding region (H-T-H motif) is located at residues 479–498; sequence WAACARALEMDVANLHRLAK.

It participates in nitrogen metabolism; nitric oxide reduction. In terms of biological role, required for the expression of anaerobic nitric oxide (NO) reductase, acts as a transcriptional activator for at least the norVW operon. Activation also requires sigma-54. This is Anaerobic nitric oxide reductase transcription regulator NorR from Enterobacter sp. (strain 638).